The sequence spans 1404 residues: DNA-directed RNA polymerase subunit beta' (1404 aa).

Zn(2+) contacts are provided by Cys60, Cys62, Cys75, and Cys78. Residues Asp449, Asp451, and Asp453 each coordinate Mg(2+). Positions 778, 852, 859, and 862 each coordinate Zn(2+). The disordered stretch occupies residues 1380–1404; the sequence is LDRPLEEEEEEEIPQAIAEESDAEE. The span at 1384 to 1404 shows a compositional bias: acidic residues; it reads LEEEEEEEIPQAIAEESDAEE.

It belongs to the RNA polymerase beta' chain family. In terms of assembly, the RNAP catalytic core consists of 2 alpha, 1 beta, 1 beta' and 1 omega subunit. When a sigma factor is associated with the core the holoenzyme is formed, which can initiate transcription. The cofactor is Mg(2+). Zn(2+) is required as a cofactor.

It catalyses the reaction RNA(n) + a ribonucleoside 5'-triphosphate = RNA(n+1) + diphosphate. Its function is as follows. DNA-dependent RNA polymerase catalyzes the transcription of DNA into RNA using the four ribonucleoside triphosphates as substrates. In Leptospira interrogans serogroup Icterohaemorrhagiae serovar Lai (strain 56601), this protein is DNA-directed RNA polymerase subunit beta'.